The chain runs to 282 residues: Glycine/sarcosine N-methyltransferase (282 aa).

A compositionally biased stretch (polar residues) spans 1–23 (MTSTQNHPLQTQDDQQRFGQSPE). Residues 1-27 (MTSTQNHPLQTQDDQQRFGQSPESVRE) form a disordered region. S-adenosyl-L-methionine contacts are provided by residues Y35, W43, R52, A76, D97, 123-124 (DW), and L141. 3 residues coordinate substrate: N143, R176, and Y217.

The protein belongs to the class I-like SAM-binding methyltransferase superfamily. Glycine N-methyltransferase family. In terms of assembly, monomer.

The enzyme catalyses glycine + 2 S-adenosyl-L-methionine = N,N-dimethylglycine + 2 S-adenosyl-L-homocysteine + 2 H(+). It carries out the reaction glycine + S-adenosyl-L-methionine = sarcosine + S-adenosyl-L-homocysteine + H(+). It catalyses the reaction sarcosine + S-adenosyl-L-methionine = N,N-dimethylglycine + S-adenosyl-L-homocysteine + H(+). It functions in the pathway amine and polyamine biosynthesis; betaine biosynthesis via glycine pathway; betaine from glycine: step 1/3. It participates in amine and polyamine biosynthesis; betaine biosynthesis via glycine pathway; betaine from glycine: step 2/3. Functionally, catalyzes the methylation of glycine and sarcosine to sarcosine and dimethylglycine, respectively, with S-adenosylmethionine (AdoMet) acting as the methyl donor. It has strict specificity for glycine and sarcosine as the methyl group acceptors. The sequence is that of Glycine/sarcosine N-methyltransferase from Parasynechococcus marenigrum (strain WH8102).